Here is a 126-residue protein sequence, read N- to C-terminus: Large ribosomal subunit protein bL12 (126 aa).

This sequence belongs to the bacterial ribosomal protein bL12 family. As to quaternary structure, homodimer. Part of the ribosomal stalk of the 50S ribosomal subunit. Forms a multimeric L10(L12)X complex, where L10 forms an elongated spine to which 2 to 4 L12 dimers bind in a sequential fashion. Binds GTP-bound translation factors.

Its function is as follows. Forms part of the ribosomal stalk which helps the ribosome interact with GTP-bound translation factors. Is thus essential for accurate translation. The sequence is that of Large ribosomal subunit protein bL12 from Rhizorhabdus wittichii (strain DSM 6014 / CCUG 31198 / JCM 15750 / NBRC 105917 / EY 4224 / RW1) (Sphingomonas wittichii).